Consider the following 136-residue polypeptide: Probable flagellum biosynthesis repressor protein FlbT 2 (136 aa).

Belongs to the FlbT family.

In terms of biological role, has a post-transcriptional repressor function in flagellum biogenesis. Associates with the 5'-UTR of fljK mRNA and promotes its degradation. The polypeptide is Probable flagellum biosynthesis repressor protein FlbT 2 (Bradyrhizobium diazoefficiens (strain JCM 10833 / BCRC 13528 / IAM 13628 / NBRC 14792 / USDA 110)).